The primary structure comprises 413 residues: Multifunctional CCA protein (413 aa).

Residues glycine 8 and arginine 11 each coordinate ATP. Residues glycine 8 and arginine 11 each contribute to the CTP site. Mg(2+)-binding residues include aspartate 21 and aspartate 23. ATP contacts are provided by arginine 91, arginine 137, and arginine 140. Residues arginine 91, arginine 137, and arginine 140 each coordinate CTP. The region spanning 228–329 (TGIHTLMTLS…VKLFDSIDAW (102 aa)) is the HD domain.

The protein belongs to the tRNA nucleotidyltransferase/poly(A) polymerase family. Bacterial CCA-adding enzyme type 1 subfamily. In terms of assembly, monomer. Can also form homodimers and oligomers. Mg(2+) serves as cofactor. Ni(2+) is required as a cofactor.

The enzyme catalyses a tRNA precursor + 2 CTP + ATP = a tRNA with a 3' CCA end + 3 diphosphate. The catalysed reaction is a tRNA with a 3' CCA end + 2 CTP + ATP = a tRNA with a 3' CCACCA end + 3 diphosphate. In terms of biological role, catalyzes the addition and repair of the essential 3'-terminal CCA sequence in tRNAs without using a nucleic acid template. Adds these three nucleotides in the order of C, C, and A to the tRNA nucleotide-73, using CTP and ATP as substrates and producing inorganic pyrophosphate. tRNA 3'-terminal CCA addition is required both for tRNA processing and repair. Also involved in tRNA surveillance by mediating tandem CCA addition to generate a CCACCA at the 3' terminus of unstable tRNAs. While stable tRNAs receive only 3'-terminal CCA, unstable tRNAs are marked with CCACCA and rapidly degraded. The protein is Multifunctional CCA protein of Citrobacter koseri (strain ATCC BAA-895 / CDC 4225-83 / SGSC4696).